The sequence spans 505 residues: Sucrose porin (505 aa).

The first 22 residues, 1–22 (MYKKRKLAILIALLTGTAAAHG), serve as a signal peptide directing secretion. The segment at 44–94 (ETRASTAESRAASAEQKVQQLTQQQQQTQATTQQVARRTTQLEEKAERPGG) is disordered. Positions 46 to 82 (RASTAESRAASAEQKVQQLTQQQQQTQATTQQVARRT) are enriched in low complexity. Positions 83–93 (TQLEEKAERPG) are enriched in basic and acidic residues.

It belongs to the porin LamB (TC 1.B.3) family. As to quaternary structure, homotrimer.

The protein localises to the cell outer membrane. Porin for sucrose uptake. The polypeptide is Sucrose porin (scrY) (Klebsiella pneumoniae).